The following is a 156-amino-acid chain: Large ribosomal subunit protein uL22 (156 aa).

It belongs to the universal ribosomal protein uL22 family. As to quaternary structure, part of the 50S ribosomal subunit.

Functionally, this protein binds specifically to 23S rRNA. It makes multiple contacts with different domains of the 23S rRNA in the assembled 50S subunit and ribosome. Its function is as follows. The globular domain of the protein is located near the polypeptide exit tunnel on the outside of the subunit, while an extended beta-hairpin is found that lines the wall of the exit tunnel in the center of the 70S ribosome. The sequence is that of Large ribosomal subunit protein uL22 from Methanocaldococcus jannaschii (strain ATCC 43067 / DSM 2661 / JAL-1 / JCM 10045 / NBRC 100440) (Methanococcus jannaschii).